The following is a 634-amino-acid chain: Putative peptidoglycan O-acetyltransferase YrhL (634 aa).

A run of 11 helical transmembrane segments spans residues 10 to 30 (YIPGLDGLRAFAVLSVITYHL), 38 to 58 (GFIGVDIFFVLSGYLITSILL), 79 to 99 (RLLPAAYLMIFSTVVWVVLFD), 110 to 130 (AISSLFYMSNWWFIFHKLSYF), 145 to 165 (LAIEEQFYIIWPMFLVVGMYI), 172 to 192 (LAAVISLLVLCSAVMMSVLYE), 244 to 264 (FLAFCILVLCVYFTDEYEPFL), 270 to 290 (LFISVTAAILIACVCHPSSFL), 307 to 327 (YGIYLWHYPVIVLSTPVQEIG), 329 to 349 (PVFWHIVLKVIVTCILAELSY), and 385 to 405 (MSIGFIIFAILIFAGGLSGLA). Residues 413–481 (KWTYSSQETN…SQQLKKPADT (69 aa)) are disordered. The span at 414 to 429 (WTYSSQETNADTSQAS) shows a compositional bias: polar residues. Basic and acidic residues-rich tracts occupy residues 430–447 (GDKKNAAADKKHNPEQKT) and 455–470 (KENKDSGQETHKKKDT).

The protein belongs to the acyltransferase 3 family.

It localises to the cell membrane. The chain is Putative peptidoglycan O-acetyltransferase YrhL (yrhL) from Bacillus subtilis (strain 168).